The following is a 108-amino-acid chain: DNA-binding protein HBbu (108 aa).

The protein belongs to the bacterial histone-like protein family.

Histone-like DNA-binding protein which is capable of wrapping DNA to stabilize it, and thus to prevent its denaturation under extreme environmental conditions. The sequence is that of DNA-binding protein HBbu (hbb) from Borreliella japonica (Borrelia japonica).